An 874-amino-acid chain; its full sequence is Alanine--tRNA ligase (874 aa).

Residues histidine 564, histidine 568, cysteine 665, and histidine 669 each coordinate Zn(2+).

The protein belongs to the class-II aminoacyl-tRNA synthetase family. It depends on Zn(2+) as a cofactor.

The protein localises to the cytoplasm. It catalyses the reaction tRNA(Ala) + L-alanine + ATP = L-alanyl-tRNA(Ala) + AMP + diphosphate. Catalyzes the attachment of alanine to tRNA(Ala) in a two-step reaction: alanine is first activated by ATP to form Ala-AMP and then transferred to the acceptor end of tRNA(Ala). Also edits incorrectly charged Ser-tRNA(Ala) and Gly-tRNA(Ala) via its editing domain. The protein is Alanine--tRNA ligase of Burkholderia vietnamiensis (strain G4 / LMG 22486) (Burkholderia cepacia (strain R1808)).